The primary structure comprises 98 residues: MPFIYINILLALTTALLGLLLFRSHMMSSLLCLEGLMLSLFIMSALTTLGTHHTLSITMPIILMVFAACETALGLALLVTISNIYGSDYVQNLNLLQC.

The next 3 helical transmembrane spans lie at 2–22 (PFIY…LLLF), 30–50 (LLCL…TTLG), and 61–81 (IILM…LVTI).

This sequence belongs to the complex I subunit 4L family. In terms of assembly, core subunit of respiratory chain NADH dehydrogenase (Complex I) which is composed of 45 different subunits.

The protein resides in the mitochondrion inner membrane. The catalysed reaction is a ubiquinone + NADH + 5 H(+)(in) = a ubiquinol + NAD(+) + 4 H(+)(out). In terms of biological role, core subunit of the mitochondrial membrane respiratory chain NADH dehydrogenase (Complex I) which catalyzes electron transfer from NADH through the respiratory chain, using ubiquinone as an electron acceptor. Part of the enzyme membrane arm which is embedded in the lipid bilayer and involved in proton translocation. The sequence is that of NADH-ubiquinone oxidoreductase chain 4L (MT-ND4L) from Bradypus tridactylus (Pale-throated three-toed sloth).